We begin with the raw amino-acid sequence, 450 residues long: Benzene 1,2-dioxygenase subunit alpha (450 aa).

Residues 56–163 (LLGHETHIRK…VETYKGLIFA (108 aa)) enclose the Rieske domain. 4 residues coordinate [2Fe-2S] cluster: Cys-96, His-98, Cys-116, and His-119. Positions 222 and 228 each coordinate Fe cation.

The protein belongs to the bacterial ring-hydroxylating dioxygenase alpha subunit family. In terms of assembly, this dioxygenase system consists of four proteins: the two subunits of the hydroxylase component (BedC1 and BedC2), a ferredoxin (BedB) and a ferredoxin reductase (BedA). It depends on [2Fe-2S] cluster as a cofactor. Fe cation serves as cofactor.

The catalysed reaction is benzene + NADH + O2 + H(+) = cis-1,2-dihydrobenzene-1,2-diol + NAD(+). The protein operates within aromatic compound metabolism; benzene degradation; catechol from benzene: step 1/2. This chain is Benzene 1,2-dioxygenase subunit alpha (bedC1), found in Pseudomonas putida (Arthrobacter siderocapsulatus).